The following is a 146-amino-acid chain: Ribosome-binding factor A (146 aa).

Residues 127–146 (EFAGEADPYKKPEDDEAAES) are disordered.

This sequence belongs to the RbfA family. In terms of assembly, monomer. Binds 30S ribosomal subunits, but not 50S ribosomal subunits or 70S ribosomes.

Its subcellular location is the cytoplasm. One of several proteins that assist in the late maturation steps of the functional core of the 30S ribosomal subunit. Associates with free 30S ribosomal subunits (but not with 30S subunits that are part of 70S ribosomes or polysomes). Required for efficient processing of 16S rRNA. May interact with the 5'-terminal helix region of 16S rRNA. The chain is Ribosome-binding factor A from Renibacterium salmoninarum (strain ATCC 33209 / DSM 20767 / JCM 11484 / NBRC 15589 / NCIMB 2235).